A 122-amino-acid chain; its full sequence is Large ribosomal subunit protein uL14 (122 aa).

Belongs to the universal ribosomal protein uL14 family. In terms of assembly, part of the 50S ribosomal subunit. Forms a cluster with proteins L3 and L19. In the 70S ribosome, L14 and L19 interact and together make contacts with the 16S rRNA in bridges B5 and B8.

Binds to 23S rRNA. Forms part of two intersubunit bridges in the 70S ribosome. This chain is Large ribosomal subunit protein uL14, found in Mycolicibacterium smegmatis (strain ATCC 700084 / mc(2)155) (Mycobacterium smegmatis).